We begin with the raw amino-acid sequence, 221 residues long: Lipoprotein-releasing system ATP-binding protein LolD (221 aa).

Residues 8-220 (LKMISKHYKQ…YNLKHGLLNI (213 aa)) form the ABC transporter domain. 42–49 (GSSGSGKS) contributes to the ATP binding site.

Belongs to the ABC transporter superfamily. Lipoprotein translocase (TC 3.A.1.125) family. As to quaternary structure, the complex is composed of two ATP-binding proteins (LolD) and two transmembrane proteins (LolC and LolE).

It is found in the cell inner membrane. Its function is as follows. Part of the ABC transporter complex LolCDE involved in the translocation of mature outer membrane-directed lipoproteins, from the inner membrane to the periplasmic chaperone, LolA. Responsible for the formation of the LolA-lipoprotein complex in an ATP-dependent manner. In Rickettsia prowazekii (strain Madrid E), this protein is Lipoprotein-releasing system ATP-binding protein LolD.